The primary structure comprises 250 residues: 2,3-bisphosphoglycerate-dependent phosphoglycerate mutase (250 aa).

Substrate contacts are provided by residues R10–N17, T23–G24, R62, E89–Y92, K100, R116–R117, and G185–N186. The Tele-phosphohistidine intermediate role is filled by H11. Catalysis depends on E89, which acts as the Proton donor/acceptor.

Belongs to the phosphoglycerate mutase family. BPG-dependent PGAM subfamily. As to quaternary structure, homodimer.

It catalyses the reaction (2R)-2-phosphoglycerate = (2R)-3-phosphoglycerate. The protein operates within carbohydrate degradation; glycolysis; pyruvate from D-glyceraldehyde 3-phosphate: step 3/5. Its function is as follows. Catalyzes the interconversion of 2-phosphoglycerate and 3-phosphoglycerate. The polypeptide is 2,3-bisphosphoglycerate-dependent phosphoglycerate mutase (Sodalis glossinidius (strain morsitans)).